The primary structure comprises 80 residues: Translation initiation factor IF-1 (80 aa).

One can recognise an S1-like domain in the interval 6 to 80 (RKQEHEKERG…LTRGRIVYRL (75 aa)).

It belongs to the IF-1 family. As to quaternary structure, component of the 30S ribosomal translation pre-initiation complex which assembles on the 30S ribosome in the order IF-2 and IF-3, IF-1 and N-formylmethionyl-tRNA(fMet); mRNA recruitment can occur at any time during PIC assembly.

It is found in the cytoplasm. Its function is as follows. One of the essential components for the initiation of protein synthesis. Stabilizes the binding of IF-2 and IF-3 on the 30S subunit to which N-formylmethionyl-tRNA(fMet) subsequently binds. Helps modulate mRNA selection, yielding the 30S pre-initiation complex (PIC). Upon addition of the 50S ribosomal subunit IF-1, IF-2 and IF-3 are released leaving the mature 70S translation initiation complex. The polypeptide is Translation initiation factor IF-1 (Aquifex aeolicus (strain VF5)).